A 376-amino-acid chain; its full sequence is Thymidine kinase (376 aa).

The tract at residues 1-47 (MASHAGQQHAPAFGQAARASGPTDGRAASRPSHRQGASEARGDPELP) is disordered. 56–63 (GPHGVGKT) lines the ATP pocket. Glu-84 functions as the Proton acceptor in the catalytic mechanism. The substrate site is built by Tyr-102 and Gln-126. Position 217 (Arg-217) interacts with ATP. Arg-223 provides a ligand contact to substrate.

Belongs to the herpesviridae thymidine kinase family. In terms of assembly, homodimer.

It catalyses the reaction thymidine + ATP = dTMP + ADP + H(+). Catalyzes the transfer of the gamma-phospho group of ATP to thymidine to generate dTMP in the salvage pathway of pyrimidine synthesis. The dTMP serves as a substrate for DNA polymerase during viral DNA replication. Allows the virus to be reactivated and to grow in non-proliferative cells lacking a high concentration of phosphorylated nucleic acid precursors. The protein is Thymidine kinase of Human herpesvirus 2 (strain 333) (HHV-2).